Here is a 303-residue protein sequence, read N- to C-terminus: Methionyl-tRNA formyltransferase (303 aa).

106-109 lines the (6S)-5,6,7,8-tetrahydrofolate pocket; the sequence is SLLP.

This sequence belongs to the Fmt family.

The catalysed reaction is L-methionyl-tRNA(fMet) + (6R)-10-formyltetrahydrofolate = N-formyl-L-methionyl-tRNA(fMet) + (6S)-5,6,7,8-tetrahydrofolate + H(+). Its function is as follows. Attaches a formyl group to the free amino group of methionyl-tRNA(fMet). The formyl group appears to play a dual role in the initiator identity of N-formylmethionyl-tRNA by promoting its recognition by IF2 and preventing the misappropriation of this tRNA by the elongation apparatus. The chain is Methionyl-tRNA formyltransferase from Thermosipho melanesiensis (strain DSM 12029 / CIP 104789 / BI429).